The following is a 500-amino-acid chain: Trehalose-6-phosphate synthase (500 aa).

Arginine 28 lines the D-glucose 6-phosphate pocket. Position 48-49 (48-49 (GG)) interacts with UDP-alpha-D-glucose. D-glucose 6-phosphate is bound by residues tyrosine 108 and aspartate 162. UDP-alpha-D-glucose is bound by residues arginine 304 and lysine 309. Arginine 342 contributes to the D-glucose 6-phosphate binding site. 407–411 (LVAKE) is a binding site for UDP-alpha-D-glucose.

Belongs to the glycosyltransferase 20 family. Homotetramer.

It carries out the reaction ADP-alpha-D-glucose + D-glucose 6-phosphate = alpha,alpha-trehalose 6-phosphate + ADP + H(+). The catalysed reaction is CDP-alpha-D-glucose + D-glucose 6-phosphate = alpha,alpha-trehalose 6-phosphate + CDP + H(+). It catalyses the reaction GDP-alpha-D-glucose + D-glucose 6-phosphate = alpha,alpha-trehalose 6-phosphate + GDP + H(+). The enzyme catalyses TDP-alpha-D-glucose + D-glucose 6-phosphate = 5-methyl-UDP + alpha,alpha-trehalose 6-phosphate + H(+). It carries out the reaction D-glucose 6-phosphate + UDP-alpha-D-glucose = alpha,alpha-trehalose 6-phosphate + UDP + H(+). It participates in glycan biosynthesis; trehalose biosynthesis. Functionally, probably involved in the osmoprotection via the biosynthesis of trehalose and in the production of glycogen and alpha-glucan via the TreS-Pep2 branch involved in the biosynthesis of maltose-1-phosphate (M1P). Catalyzes the transfer of glucose from UDP-glucose (UDP-Glc) to D-glucose 6-phosphate (Glc-6-P) to form trehalose-6-phosphate. Probably also able to use ADP-Glc, CDP-Glc, GDP-Glc and TDP-Glc as glucosyl donors. The protein is Trehalose-6-phosphate synthase of Mycobacterium tuberculosis (strain CDC 1551 / Oshkosh).